We begin with the raw amino-acid sequence, 703 residues long: Antigen peptide transporter 2 (703 aa).

The Lumenal portion of the chain corresponds to M1–P6. The helical transmembrane segment at R7 to L27 threads the bilayer. Residues G28 to G56 are Cytoplasmic-facing. The chain crosses the membrane as a helical span at residues G57–F77. At S78 to S98 the chain is on the lumenal side. Residues W99–L119 traverse the membrane as a helical segment. Over S120–D148 the chain is Cytoplasmic. Residues L149–I169 traverse the membrane as a helical segment. In terms of domain architecture, ABC transmembrane type-1 spans L152–S435. The Lumenal portion of the chain corresponds to P170–D187. The helical transmembrane segment at A188–G208 threads the bilayer. The Cytoplasmic portion of the chain corresponds to C209–L266. Residues N267–Q287 form a helical membrane-spanning segment. Residues V288 to T293 lie on the Lumenal side of the membrane. A helical transmembrane segment spans residues F294–H314. The interval P301–V389 is part of the peptide-binding site. At Q315 to S374 the chain is on the cytoplasmic side. Residues L375–G395 traverse the membrane as a helical segment. The Lumenal segment spans residues V396–G408. The chain crosses the membrane as a helical span at residues L409 to M429. The tract at residues L414–M433 is part of the peptide-binding site. Over Y430–A703 the chain is Cytoplasmic. The ABC transporter domain occupies V468 to E702. Residue G503 to S510 coordinates ATP.

The protein belongs to the ABC transporter superfamily. ABCB family. MHC peptide exporter (TC 3.A.1.209) subfamily. As to quaternary structure, heterodimer of TAP1 and TAP2 (TAP1-TAP2). A component of the peptide loading complex (PLC), interacts via TAPBP with MHCI heterodimer; this interaction mediates peptide-MHCI assembly. The cofactor is Mg(2+).

The protein localises to the endoplasmic reticulum membrane. The enzyme catalyses a peptide antigen(in) + ATP + H2O = a peptide antigen(out) + ADP + phosphate + H(+). ABC transporter associated with antigen processing. In complex with TAP1 mediates unidirectional translocation of peptide antigens from cytosol to endoplasmic reticulum (ER) for loading onto MHC class I (MHCI) molecules. Uses the chemical energy of ATP to export peptides against the concentration gradient. During the transport cycle alternates between 'inward-facing' state with peptide binding site facing the cytosol to 'outward-facing' state with peptide binding site facing the ER lumen. Peptide antigen binding to ATP-loaded TAP1-TAP2 induces a switch to hydrolysis-competent 'outward-facing' conformation ready for peptide loading onto nascent MHCI molecules. Subsequently ATP hydrolysis resets the transporter to the 'inward facing' state for a new cycle. As a component of the peptide loading complex (PLC), acts as a molecular scaffold essential for peptide-MHCI assembly and antigen presentation. The polypeptide is Antigen peptide transporter 2 (Tap2) (Rattus norvegicus (Rat)).